A 290-amino-acid chain; its full sequence is MYG1 protein CPn_0489/CP_0265/CPj0489/CpB0509 (290 aa).

It belongs to the MYG1 family.

In Chlamydia pneumoniae (Chlamydophila pneumoniae), this protein is MYG1 protein CPn_0489/CP_0265/CPj0489/CpB0509.